Here is a 393-residue protein sequence, read N- to C-terminus: Elongation factor Tu (393 aa).

The tr-type G domain occupies 10–203; it reads KPHVNIGTIG…AVDSYIPEPV (194 aa). A G1 region spans residues 19–26; the sequence is GHVDHGKT. 19–26 contacts GTP; the sequence is GHVDHGKT. T26 contacts Mg(2+). Positions 60 to 64 are G2; that stretch reads GITIS. The G3 stretch occupies residues 81-84; it reads DCPG. GTP is bound by residues 81-85 and 136-139; these read DCPGH and NKVD. The tract at residues 136-139 is G4; the sequence is NKVD. The G5 stretch occupies residues 173–175; it reads SAL.

This sequence belongs to the TRAFAC class translation factor GTPase superfamily. Classic translation factor GTPase family. EF-Tu/EF-1A subfamily. As to quaternary structure, monomer.

Its subcellular location is the cytoplasm. The catalysed reaction is GTP + H2O = GDP + phosphate + H(+). In terms of biological role, GTP hydrolase that promotes the GTP-dependent binding of aminoacyl-tRNA to the A-site of ribosomes during protein biosynthesis. This chain is Elongation factor Tu, found in Prosthecochloris aestuarii (strain DSM 271 / SK 413).